Reading from the N-terminus, the 325-residue chain is Short chain isoprenyl diphosphate synthase (325 aa).

Isopentenyl diphosphate is bound by residues Lys-44, Arg-47, and His-76. The Mg(2+) site is built by Asp-83 and Asp-87. Arg-92 serves as a coordination point for an all-trans-polyprenyl diphosphate. Arg-93 contributes to the isopentenyl diphosphate binding site. Residues Lys-173, Thr-174, Gln-211, Lys-228, and Lys-238 each contribute to the an all-trans-polyprenyl diphosphate site.

It belongs to the FPP/GGPP synthase family. Homodimer. Mg(2+) is required as a cofactor.

It localises to the cytoplasm. The sequence is that of Short chain isoprenyl diphosphate synthase (idsA) from Methanothermobacter thermautotrophicus (strain ATCC 29096 / DSM 1053 / JCM 10044 / NBRC 100330 / Delta H) (Methanobacterium thermoautotrophicum).